The following is a 221-amino-acid chain: Large ribosomal subunit protein uL3 (221 aa).

Belongs to the universal ribosomal protein uL3 family. As to quaternary structure, part of the 50S ribosomal subunit. Forms a cluster with proteins L14 and L19.

Its function is as follows. One of the primary rRNA binding proteins, it binds directly near the 3'-end of the 23S rRNA, where it nucleates assembly of the 50S subunit. The protein is Large ribosomal subunit protein uL3 of Chlamydia felis (strain Fe/C-56) (Chlamydophila felis).